The chain runs to 384 residues: Putative odorant receptor 98b (384 aa).

Over 1 to 34 the chain is Cytoplasmic; the sequence is MLTDKFLRLQSALFRLLGLELLHEQDVGHRYPWR. Residues 35 to 55 form a helical membrane-spanning segment; that stretch reads SICCILSVASFMPLTIAFGLQ. The Extracellular segment spans residues 56-66; that stretch reads NVQNVEQLTDS. The chain crosses the membrane as a helical span at residues 67–87; sequence LCSVLVDLLALCKIGLFLWLY. The Cytoplasmic segment spans residues 88-128; that stretch reads KDFKFLIGQFYCVLQTETHTAVAEMIVTRESRRDQFISAMY. Residues 129 to 149 form a helical membrane-spanning segment; that stretch reads AYCFITAGLSACLMSPLSMLI. The Extracellular portion of the chain corresponds to 150-177; it reads SYQRTGELQPKFPFPSVYPWDNMKLSNY. Residues 178–198 traverse the membrane as a helical segment; sequence IISYFWNVCAALGVALPTVCV. At 199 to 258 the chain is on the cytoplasmic side; that stretch reads DTLFCSLSHNLCALFQIARHKMMHFEGRNTKETHENLKHVFQLYALCLNLGHFLNEYFRP. The chain crosses the membrane as a helical span at residues 259 to 279; it reads LICQFVAASLHLCVLCYQLSA. The Extracellular portion of the chain corresponds to 280–284; sequence NILQP. Residues 285 to 305 form a helical membrane-spanning segment; it reads ALLFYAAFTAAVVGQVSIYCF. Topologically, residues 306–329 are cytoplasmic; the sequence is CGSSIHSECQLFGQAIYESSWPHL. Residues 330–350 form a helical membrane-spanning segment; the sequence is LQENLQLVSSLKIAMMRSSLG. The Extracellular portion of the chain corresponds to 351-384; sequence CPIDGYFFEANRETLITVSKAFIKVSKKTPQVND.

This sequence belongs to the insect chemoreceptor superfamily. Heteromeric odorant receptor channel (TC 1.A.69) family. Or1a subfamily. Interacts with Orco. Complexes exist early in the endomembrane system in olfactory sensory neurons (OSNs), coupling these complexes to the conserved ciliary trafficking pathway.

It localises to the cell membrane. In terms of biological role, odorant receptor which mediates acceptance or avoidance behavior, depending on its substrates. The odorant receptor repertoire encodes a large collection of odor stimuli that vary widely in identity, intensity, and duration. May form a complex with Orco to form odorant-sensing units, providing sensitive and prolonged odorant signaling and calcium permeability. The chain is Putative odorant receptor 98b (Or98b) from Drosophila melanogaster (Fruit fly).